The chain runs to 122 residues: Small ribosomal subunit protein uS13 (122 aa).

Residues 95–122 (NLPVRGQRTHTNARTRKGKAKPIAGKKK) are disordered.

It belongs to the universal ribosomal protein uS13 family. In terms of assembly, part of the 30S ribosomal subunit. Forms a loose heterodimer with protein S19. Forms two bridges to the 50S subunit in the 70S ribosome.

Located at the top of the head of the 30S subunit, it contacts several helices of the 16S rRNA. In the 70S ribosome it contacts the 23S rRNA (bridge B1a) and protein L5 of the 50S subunit (bridge B1b), connecting the 2 subunits; these bridges are implicated in subunit movement. Contacts the tRNAs in the A and P-sites. In Methylobacterium nodulans (strain LMG 21967 / CNCM I-2342 / ORS 2060), this protein is Small ribosomal subunit protein uS13.